A 160-amino-acid chain; its full sequence is Ribosomal RNA large subunit methyltransferase H (160 aa).

S-adenosyl-L-methionine contacts are provided by residues Leu-76, Gly-108, and 127-132; that span reads FGALTW.

This sequence belongs to the RNA methyltransferase RlmH family. As to quaternary structure, homodimer.

It is found in the cytoplasm. It carries out the reaction pseudouridine(1915) in 23S rRNA + S-adenosyl-L-methionine = N(3)-methylpseudouridine(1915) in 23S rRNA + S-adenosyl-L-homocysteine + H(+). In terms of biological role, specifically methylates the pseudouridine at position 1915 (m3Psi1915) in 23S rRNA. The sequence is that of Ribosomal RNA large subunit methyltransferase H from Mesorhizobium japonicum (strain LMG 29417 / CECT 9101 / MAFF 303099) (Mesorhizobium loti (strain MAFF 303099)).